Reading from the N-terminus, the 478-residue chain is Glutamyl-tRNA(Gln) amidotransferase subunit A 2 (478 aa).

Active-site charge relay system residues include Lys79 and Ser154. The active-site Acyl-ester intermediate is Ser178.

This sequence belongs to the amidase family. GatA subfamily. In terms of assembly, heterotrimer of A, B and C subunits.

The enzyme catalyses L-glutamyl-tRNA(Gln) + L-glutamine + ATP + H2O = L-glutaminyl-tRNA(Gln) + L-glutamate + ADP + phosphate + H(+). In terms of biological role, allows the formation of correctly charged Gln-tRNA(Gln) through the transamidation of misacylated Glu-tRNA(Gln) in organisms which lack glutaminyl-tRNA synthetase. The reaction takes place in the presence of glutamine and ATP through an activated gamma-phospho-Glu-tRNA(Gln). The protein is Glutamyl-tRNA(Gln) amidotransferase subunit A 2 (gatA2) of Clostridium acetobutylicum (strain ATCC 824 / DSM 792 / JCM 1419 / IAM 19013 / LMG 5710 / NBRC 13948 / NRRL B-527 / VKM B-1787 / 2291 / W).